Reading from the N-terminus, the 151-residue chain is Actin-depolymerizing factor 10 (151 aa).

The ADF-H domain maps to 15–149 (PAWIEVPEKS…DLEVLRGRAN (135 aa)).

Belongs to the actin-binding proteins ADF family.

In terms of biological role, actin-depolymerizing protein. Severs actin filaments (F-actin) and binds to actin monomers. This is Actin-depolymerizing factor 10 (ADF10) from Oryza sativa subsp. japonica (Rice).